Consider the following 307-residue polypeptide: UDP-N-acetylenolpyruvoylglucosamine reductase (307 aa).

In terms of domain architecture, FAD-binding PCMH-type spans R27–D193. Residue R172 is part of the active site. Residue S222 is the Proton donor of the active site. E299 is a catalytic residue.

Belongs to the MurB family. Requires FAD as cofactor.

It is found in the cytoplasm. It catalyses the reaction UDP-N-acetyl-alpha-D-muramate + NADP(+) = UDP-N-acetyl-3-O-(1-carboxyvinyl)-alpha-D-glucosamine + NADPH + H(+). Its pathway is cell wall biogenesis; peptidoglycan biosynthesis. In terms of biological role, cell wall formation. The chain is UDP-N-acetylenolpyruvoylglucosamine reductase from Caulobacter sp. (strain K31).